A 753-amino-acid polypeptide reads, in one-letter code: 5-methyltetrahydropteroyltriglutamate--homocysteine methyltransferase (753 aa).

5-methyltetrahydropteroyltri-L-glutamate contacts are provided by residues 19–22 (RELK) and arginine 113. Residues 430-432 (IGS) and glutamate 483 each bind L-homocysteine. L-methionine-binding positions include 430–432 (IGS) and glutamate 483. 5-methyltetrahydropteroyltri-L-glutamate is bound by residues 514 to 515 (RC) and tryptophan 560. Aspartate 598 serves as a coordination point for L-homocysteine. Aspartate 598 is a binding site for L-methionine. Glutamate 604 lines the 5-methyltetrahydropteroyltri-L-glutamate pocket. Residues histidine 640, cysteine 642, and glutamate 664 each contribute to the Zn(2+) site. Residue histidine 693 is the Proton donor of the active site. Cysteine 725 contacts Zn(2+).

The protein belongs to the vitamin-B12 independent methionine synthase family. Requires Zn(2+) as cofactor.

The enzyme catalyses 5-methyltetrahydropteroyltri-L-glutamate + L-homocysteine = tetrahydropteroyltri-L-glutamate + L-methionine. It participates in amino-acid biosynthesis; L-methionine biosynthesis via de novo pathway; L-methionine from L-homocysteine (MetE route): step 1/1. In terms of biological role, catalyzes the transfer of a methyl group from 5-methyltetrahydrofolate to homocysteine resulting in methionine formation. The sequence is that of 5-methyltetrahydropteroyltriglutamate--homocysteine methyltransferase from Rhodococcus jostii (strain RHA1).